The sequence spans 145 residues: 3-dehydroquinate dehydratase (145 aa).

Tyr-22 functions as the Proton acceptor in the catalytic mechanism. Substrate is bound by residues Asn-73, His-79, and Asp-86. The active-site Proton donor is His-99. Residues 100 to 101 (LS) and Arg-110 each bind substrate.

It belongs to the type-II 3-dehydroquinase family. In terms of assembly, homododecamer.

The catalysed reaction is 3-dehydroquinate = 3-dehydroshikimate + H2O. It participates in metabolic intermediate biosynthesis; chorismate biosynthesis; chorismate from D-erythrose 4-phosphate and phosphoenolpyruvate: step 3/7. In terms of biological role, catalyzes a trans-dehydration via an enolate intermediate. The sequence is that of 3-dehydroquinate dehydratase from Prochlorococcus marinus (strain NATL1A).